A 522-amino-acid polypeptide reads, in one-letter code: Nif-specific regulatory protein (522 aa).

Residues 1 to 184 (MNATIPQRSA…AQTVRLVVNI (184 aa)) form an a domain region. The GAF domain occupies 37 to 178 (QIDELLEQVL…IVANLLAQTV (142 aa)). In terms of domain architecture, Sigma-54 factor interaction spans 211–439 (VVGHTPTMRR…LENCLERSAI (229 aa)). ATP is bound by residues 239 to 246 (GESGTGKE) and 302 to 311 (ADGGTLFLDE). Residues 440–479 (MSEDGTITRDVVSLTGVDNESPPLAAPLPEVNLADETLDD) form an inter-domain linker region. Residues 480-522 (RERVIAALEQAGWVQAKAARLLGMTPRQIAYRIQTLNIHMRKI) are C-terminal DNA-binding domain. Residues 494–513 (QAKAARLLGMTPRQIAYRIQ) constitute a DNA-binding region (H-T-H motif).

Interacts with sigma-54.

In terms of biological role, required for activation of most nif operons, which are directly involved in nitrogen fixation. In Azotobacter vinelandii, this protein is Nif-specific regulatory protein (nifA).